Reading from the N-terminus, the 198-residue chain is Probable molybdenum cofactor guanylyltransferase (198 aa).

GTP is bound by residues 9–11 (LAG), Lys22, Asp66, and Asp95. A Mg(2+)-binding site is contributed by Asp95.

It belongs to the MobA family. The cofactor is Mg(2+).

It localises to the cytoplasm. It carries out the reaction Mo-molybdopterin + GTP + H(+) = Mo-molybdopterin guanine dinucleotide + diphosphate. Its function is as follows. Transfers a GMP moiety from GTP to Mo-molybdopterin (Mo-MPT) cofactor (Moco or molybdenum cofactor) to form Mo-molybdopterin guanine dinucleotide (Mo-MGD) cofactor. This chain is Probable molybdenum cofactor guanylyltransferase, found in Clostridium perfringens (strain ATCC 13124 / DSM 756 / JCM 1290 / NCIMB 6125 / NCTC 8237 / Type A).